The following is a 322-amino-acid chain: Basic 30 kDa endochitinase (322 aa).

Residues 1 to 22 (MRLSEFTTLFLLFSVLLLSASA) form the signal peptide. In terms of domain architecture, Chitin-binding type-1 spans 23 to 64 (EQCGSQAGGALCASGLCCSKFGWCGNTNEYCGPGNCQSQCPG). Intrachain disulfides connect C25/C40, C34/C46, C39/C53, and C58/C62. A 4-hydroxyproline mark is found at P66 and P68. 3 disulfides stabilise this stretch: C93–C156, C168–C176, and C275–C307. E138 (proton donor) is an active-site residue. The propeptide at 316–322 (GLLVDIM) is removed in mature form.

This sequence belongs to the glycosyl hydrolase 19 family. Chitinase class I subfamily. The 4-hydroxyproline residues are not glycosylated in this plant vacuolar protein.

The protein localises to the vacuole. The protein resides in the secreted. Its subcellular location is the cell wall. It catalyses the reaction Random endo-hydrolysis of N-acetyl-beta-D-glucosaminide (1-&gt;4)-beta-linkages in chitin and chitodextrins.. Defense against chitin-containing fungal pathogens. The sequence is that of Basic 30 kDa endochitinase (CHI9) from Solanum lycopersicum (Tomato).